The sequence spans 570 residues: Peptidyl-prolyl cis-trans isomerase FKBP9 (570 aa).

The N-terminal stretch at 1 to 24 (MAFRGWRPPPPPLLLLLLWVTGQA) is a signal peptide. PPIase FKBP-type domains follow at residues 54–142 (GDFV…MDIW), 166–254 (SDFV…LDLH), 278–365 (GDFL…IDFH), and 389–477 (GDYL…LELV). 4 N-linked (GlcNAc...) asparagine glycosylation sites follow: Asn-174, Asn-286, Asn-302, and Asn-397. EF-hand domains follow at residues 488-523 (WNGEVSPNLFEEIDKDGNGEVLLEEFSEYIHAQVAS) and 533-568 (DAELIVKNMFTNQDRNGDGKVTAEEFKLKDQEAKHD). The Ca(2+) site is built by Asp-501, Asp-503, Asn-505, Glu-507, Glu-512, Asp-546, Asn-548, Asp-550, Lys-552, and Glu-557. Positions 567–570 (HDEL) match the Prevents secretion from ER motif.

Phosphorylated.

The protein resides in the endoplasmic reticulum. It carries out the reaction [protein]-peptidylproline (omega=180) = [protein]-peptidylproline (omega=0). Inhibited by FK506. PPIases accelerate the folding of proteins during protein synthesis. This chain is Peptidyl-prolyl cis-trans isomerase FKBP9 (FKBP9), found in Homo sapiens (Human).